Here is a 516-residue protein sequence, read N- to C-terminus: Maturase K (516 aa).

This sequence belongs to the intron maturase 2 family. MatK subfamily.

It is found in the plastid. Its subcellular location is the chloroplast. In terms of biological role, usually encoded in the trnK tRNA gene intron. Probably assists in splicing its own and other chloroplast group II introns. The protein is Maturase K of Colchicum speciosum (Giant meadow saffron).